We begin with the raw amino-acid sequence, 251 residues long: Ubiquinone/menaquinone biosynthesis C-methyltransferase UbiE (251 aa).

Residues Thr-74, Asp-95, and 123-124 (NA) contribute to the S-adenosyl-L-methionine site.

This sequence belongs to the class I-like SAM-binding methyltransferase superfamily. MenG/UbiE family.

It carries out the reaction a 2-demethylmenaquinol + S-adenosyl-L-methionine = a menaquinol + S-adenosyl-L-homocysteine + H(+). The catalysed reaction is a 2-methoxy-6-(all-trans-polyprenyl)benzene-1,4-diol + S-adenosyl-L-methionine = a 5-methoxy-2-methyl-3-(all-trans-polyprenyl)benzene-1,4-diol + S-adenosyl-L-homocysteine + H(+). Its pathway is quinol/quinone metabolism; menaquinone biosynthesis; menaquinol from 1,4-dihydroxy-2-naphthoate: step 2/2. The protein operates within cofactor biosynthesis; ubiquinone biosynthesis. Methyltransferase required for the conversion of demethylmenaquinol (DMKH2) to menaquinol (MKH2) and the conversion of 2-polyprenyl-6-methoxy-1,4-benzoquinol (DDMQH2) to 2-polyprenyl-3-methyl-6-methoxy-1,4-benzoquinol (DMQH2). The protein is Ubiquinone/menaquinone biosynthesis C-methyltransferase UbiE of Shewanella sp. (strain ANA-3).